Reading from the N-terminus, the 291-residue chain is tRNA (guanine-N(1)-)-methyltransferase (291 aa).

S-adenosyl-L-methionine is bound by residues Gly-160 and 184–189; that span reads IGDYVL.

It belongs to the RNA methyltransferase TrmD family. Homodimer.

It is found in the cytoplasm. It carries out the reaction guanosine(37) in tRNA + S-adenosyl-L-methionine = N(1)-methylguanosine(37) in tRNA + S-adenosyl-L-homocysteine + H(+). In terms of biological role, specifically methylates guanosine-37 in various tRNAs. The polypeptide is tRNA (guanine-N(1)-)-methyltransferase (Corynebacterium efficiens (strain DSM 44549 / YS-314 / AJ 12310 / JCM 11189 / NBRC 100395)).